Here is a 985-residue protein sequence, read N- to C-terminus: Ras and Rab interactor 3 (985 aa).

The tract at residues 1–24 is disordered; it reads MIRHAGAPARGDPTGPVPVVGKGE. An SH2 domain is found at 63 to 158; it reads WLQLSLGQAE…LLPFTLRLPQ (96 aa). Disordered regions lie at residues 183–202, 251–293, and 315–531; these read SLNP…DRAP, QPPL…QPCS, and PPVP…KGSL. Basic and acidic residues predominate over residues 189–201; that stretch reads ERGKPAEPPRDRA. Pro residues-rich tracts occupy residues 278–288 and 315–336; these read RRPPPPPPVLP and PPVP…PNQP. Over residues 424-442 the composition is skewed to basic and acidic residues; sequence DTPRESTEQGQDTEVKASD. The interval 587–732 is interaction with RAB5B; it reads FSSMFHAFLS…TTTDLGVTTS (146 aa). The region spanning 703–846 is the VPS9 domain; it reads HSKDGSLQQL…IKSYDKITVT (144 aa). The Ras-associating domain maps to 877-963; the sequence is QDFICVSYLE…RDFHFVYRPL (87 aa).

Belongs to the RIN (Ras interaction/interference) family. In terms of assembly, interacts with CD2AP, RAB5B, RAB31 and BIN1. Widely expressed.

The protein resides in the cytoplasm. It localises to the cytoplasmic vesicle. The protein localises to the early endosome. Its function is as follows. Ras effector protein that functions as a guanine nucleotide exchange (GEF) for RAB5B and RAB31, by exchanging bound GDP for free GTP. Required for normal RAB31 function. In Homo sapiens (Human), this protein is Ras and Rab interactor 3 (RIN3).